The following is a 345-amino-acid chain: D-amino-acid oxidase (345 aa).

FAD is bound by residues Ser-10, Ile-13, Ser-49, Gly-53, and Asn-55. (R)-lactate-binding residues include Tyr-230 and Arg-290. Anthranilate contacts are provided by Tyr-230 and Arg-290. FAD contacts are provided by Arg-290, Ser-317, Gly-320, Tyr-321, and Gln-322. The Microbody targeting signal signature appears at 343 to 345 (AKL).

The protein belongs to the DAMOX/DASOX family. FAD is required as a cofactor.

The protein resides in the peroxisome matrix. The catalysed reaction is a D-alpha-amino acid + O2 + H2O = a 2-oxocarboxylate + H2O2 + NH4(+). It carries out the reaction D-methionine + O2 + H2O = 4-methylsulfanyl-2-oxobutanoate + H2O2 + NH4(+). Functionally, catalyzes the oxidative deamination of D-amino acids with broad substrate specificity. Enables the organism to utilize D-amino acids as a source of nutrients. Enables the organism to utilize D-alanine as a nitrogen source, although it is not strictly required for this process. Also enables utilization of D-alanine as a carbon source. The protein is D-amino-acid oxidase of Candida boidinii (Yeast).